We begin with the raw amino-acid sequence, 205 residues long: Urease accessory protein UreE (205 aa).

Residues 171-192 show a composition bias toward basic and acidic residues; sequence HHGHSHSHDHDHDHDHDHDHQH. The disordered stretch occupies residues 171-205; the sequence is HHGHSHSHDHDHDHDHDHDHQHGPCCSHGHHHGHR.

This sequence belongs to the UreE family.

The protein localises to the cytoplasm. In terms of biological role, involved in urease metallocenter assembly. Binds nickel. Probably functions as a nickel donor during metallocenter assembly. The sequence is that of Urease accessory protein UreE from Burkholderia pseudomallei (strain K96243).